The chain runs to 67 residues: Systemic RNA interference defective protein 5 (67 aa).

Residues 1–18 (MPSKNCAKNLHACQWERD) are Extracellular-facing. The chain crosses the membrane as a helical span at residues 19–39 (IALVFLGLMVLFNIGQVVYMN). The Cytoplasmic segment spans residues 40-67 (RARLYRLIRRGAEQIPADDEEPIIGIRD).

In terms of tissue distribution, ubiquitously present in most tissues tested. Expressed in the somatic cells of intestine, muscle, neurons, somatic gonad and embryos but not in the germline (at protein level).

The protein resides in the late endosome membrane. In terms of biological role, plays a role in RNA-mediated gene silencing by mediating transport of both ingested and endogenous dsRNA between cells. Not required for the uptake of dsRNA from the intestinal lumen. The protein is Systemic RNA interference defective protein 5 of Caenorhabditis elegans.